A 452-amino-acid polypeptide reads, in one-letter code: UDP-N-acetylmuramate--L-alanine ligase (452 aa).

110–116 (GTHGKTT) is a binding site for ATP.

This sequence belongs to the MurCDEF family.

Its subcellular location is the cytoplasm. The enzyme catalyses UDP-N-acetyl-alpha-D-muramate + L-alanine + ATP = UDP-N-acetyl-alpha-D-muramoyl-L-alanine + ADP + phosphate + H(+). Its pathway is cell wall biogenesis; peptidoglycan biosynthesis. Functionally, cell wall formation. The chain is UDP-N-acetylmuramate--L-alanine ligase from Francisella philomiragia subsp. philomiragia (strain ATCC 25017 / CCUG 19701 / FSC 153 / O#319-036).